A 196-amino-acid polypeptide reads, in one-letter code: Type-4 uracil-DNA glycosylase (196 aa).

[4Fe-4S] cluster-binding residues include Cys-13 and Cys-16. Residues 40–42 (GEA), Phe-54, and Asn-80 contribute to the uracil site. Residues Cys-84 and Cys-100 each contribute to the [4Fe-4S] cluster site. His-162 serves as a coordination point for uracil.

Belongs to the uracil-DNA glycosylase (UDG) superfamily. Type 4 (UDGa) family.

The catalysed reaction is Hydrolyzes single-stranded DNA or mismatched double-stranded DNA and polynucleotides, releasing free uracil.. Functionally, removes uracil bases that are present in DNA as a result of either deamination of cytosine or misincorporation of dUMP instead of dTMP. Can remove uracil from double-stranded DNA containing either a U/G or U/A base pair as well as from single-stranded DNA. This chain is Type-4 uracil-DNA glycosylase, found in Pyrobaculum aerophilum (strain ATCC 51768 / DSM 7523 / JCM 9630 / CIP 104966 / NBRC 100827 / IM2).